The chain runs to 558 residues: Armadillo repeat-containing X-linked protein 5 (558 aa).

Basic and acidic residues-rich tracts occupy residues 1 to 14 (MVDS…RGKA) and 139 to 156 (KSHD…REET). Disordered regions lie at residues 1–35 (MVDS…GKTQ) and 139–165 (KSHD…SSDE). One copy of the ARM 1 repeat lies at 300–339 (CKSRGFSLEPKEFDKLVALLKLTKDPFIHEIATMIMGISP). Residues 369-388 (HPGALSMVDDSSESSEEPKS) are disordered. ARM repeat units lie at residues 422-461 (IKFE…CLSK), 463-503 (HANT…NINF), and 520-558 (SELI…ILKL).

It belongs to the eutherian X-chromosome-specific Armcx family.

The polypeptide is Armadillo repeat-containing X-linked protein 5 (ARMCX5) (Homo sapiens (Human)).